The primary structure comprises 75 residues: U6-lycotoxin-Ls1h (75 aa).

Residues 1-21 (MKLLLFTALVLVVISLIEVEA) form the signal peptide. Positions 22-25 (ENER) are excised as a propeptide.

Belongs to the neurotoxin 19 (CSTX) family. 06 (U6-Lctx) subfamily. Post-translationally, contains 4 disulfide bonds. Expressed by the venom gland.

It localises to the secreted. This chain is U6-lycotoxin-Ls1h, found in Lycosa singoriensis (Wolf spider).